A 321-amino-acid chain; its full sequence is Lipoyl synthase (321 aa).

Residues Cys68, Cys73, Cys79, Cys94, Cys98, Cys101, and Ser308 each contribute to the [4Fe-4S] cluster site. Residues 80 to 297 (FNHGTATFMI…KAEAMAMGFT (218 aa)) enclose the Radical SAM core domain.

It belongs to the radical SAM superfamily. Lipoyl synthase family. [4Fe-4S] cluster serves as cofactor.

It localises to the cytoplasm. The enzyme catalyses [[Fe-S] cluster scaffold protein carrying a second [4Fe-4S](2+) cluster] + N(6)-octanoyl-L-lysyl-[protein] + 2 oxidized [2Fe-2S]-[ferredoxin] + 2 S-adenosyl-L-methionine + 4 H(+) = [[Fe-S] cluster scaffold protein] + N(6)-[(R)-dihydrolipoyl]-L-lysyl-[protein] + 4 Fe(3+) + 2 hydrogen sulfide + 2 5'-deoxyadenosine + 2 L-methionine + 2 reduced [2Fe-2S]-[ferredoxin]. It functions in the pathway protein modification; protein lipoylation via endogenous pathway; protein N(6)-(lipoyl)lysine from octanoyl-[acyl-carrier-protein]: step 2/2. Catalyzes the radical-mediated insertion of two sulfur atoms into the C-6 and C-8 positions of the octanoyl moiety bound to the lipoyl domains of lipoate-dependent enzymes, thereby converting the octanoylated domains into lipoylated derivatives. This Klebsiella pneumoniae (strain 342) protein is Lipoyl synthase.